Here is a 176-residue protein sequence, read N- to C-terminus: Macro domain-containing protein LMOf2365_2748 (176 aa).

In terms of domain architecture, Macro spans M1–V175.

The protein belongs to the MacroD-type family.

This chain is Macro domain-containing protein LMOf2365_2748, found in Listeria monocytogenes serotype 4b (strain F2365).